The following is a 444-amino-acid chain: MQVTTEAVSGVARRLNVSVPTSRINEQFEARLKRTAKTVKINGFRPGKVPANVVRREYGASIYQEVVNDIIRDSVFEAIQQEKINAVGMPNIEKVEHKEDALVFEATVEVYPEVEVKAFDGLEVERKTAEIKDADVDTMIENLQKQRQTWAVTKGMAKKDMQVTFDFEGSIDGEKFEGGSAEDFKLVLGSGRMIPGFEDGIIGMKAGEEKVIDVTFPEDYQAENLAGKAAQFKITVKQVEKPKLPEIDAEFLKIFGVSEEEGIEKLKADVRKNMEREVRNGLRNQVKQAAFDALVAANEIEVPAAMVAQEIDRQRQQMVQQFTQQFGGAGAQSFDKSMLPDELFKEQAERSVKLGVLVSKVLADAKLEVDQARVDAYIDDMASSYEDPTEVIEYFKNDAQQRAQIEAVVLEDQVVDHILASAKVTDKAVSYEDLLKEQQARRMG.

Residues aspartate 160–proline 245 enclose the PPIase FKBP-type domain.

The protein belongs to the FKBP-type PPIase family. Tig subfamily.

It localises to the cytoplasm. The enzyme catalyses [protein]-peptidylproline (omega=180) = [protein]-peptidylproline (omega=0). Functionally, involved in protein export. Acts as a chaperone by maintaining the newly synthesized protein in an open conformation. Functions as a peptidyl-prolyl cis-trans isomerase. This chain is Trigger factor, found in Acinetobacter baumannii (strain AB0057).